Reading from the N-terminus, the 93-residue chain is Protein BOLA2 (93 aa).

Cys-29 carries the post-translational modification S-glutathionyl cysteine; transient; alternate. Residues 72–93 form a disordered region; it reads KAQTPQQWKPPSQDSATLTKDA.

This sequence belongs to the bolA/yrbA family. In terms of assembly, homodimer. Interacts in vitro with GRXS14, GRXS15, GRXS16 and GRXS17, but not with GRXC5. Interacts in vivo only with GRXS17. In terms of processing, can be either glutathionylated or forming covalent homodimers, depending on the oxidation state.

It is found in the cytoplasm. The protein localises to the nucleus. Its function is as follows. May act either alone or in interaction with glutaredoxin as a redox-regulated transcriptional regulator, or as a factor regulating Fe-S cluster biogenesis. The GRXS17-BOLA2 heterodimer binds a labile, oxygen sensitive iron-sulfur cluster. The chain is Protein BOLA2 from Arabidopsis thaliana (Mouse-ear cress).